The following is a 168-amino-acid chain: Secretory-abundant heat soluble protein 33020 (168 aa).

A signal peptide spans 1-19 (MARFLVALALFGVVAMTAA). Residues 26–57 (EWSGKPWLGKFVAEVSDKSENWEAFVDALGLP) are SAHS-c1. Residues 72 to 100 (YKQGEHYHHILSLPDKNINKDIEFTLGQE) form an SAHS-c2 region. The segment at 113–162 (KYFEDGNKLVADVSIPAKGKSIHDVYDVQGDQLIKSYKVGDVVAKKWFKK) is SAHS-c3.

The protein belongs to the Secretory-abundant heat soluble protein (SAHS) family.

The protein localises to the secreted. In terms of biological role, secreted heat soluble protein acting as a molecular shield in water-deficient condition. Tardigrade-specific intrinsically disordered proteins (TDPs) are essential for desiccation tolerance by forming non-crystalline amorphous solids upon desiccation, and this vitrified state mirrors their protective capabilities. The protein is Secretory-abundant heat soluble protein 33020 of Hypsibius exemplaris (Freshwater tardigrade).